The sequence spans 155 residues: Cardioactive peptide (155 aa).

A signal peptide spans 1 to 23 (MRTSMRISLRLLALLACAICSQA). The propeptide occupies 24-49 (SLERENNEGTNMANHKLSGVIQWKYE). Residues Cys-54 and Cys-60 are joined by a disulfide bond. A Cysteine amide modification is found at Cys-60. Residues 64 to 155 (RTYPSYPPFS…MQQLEERESK (92 aa)) constitute a propeptide that is removed on maturation. The tract at residues 135-155 (NKQKMLQNEKEMQQLEERESK) is disordered. The span at 141-155 (QNEKEMQQLEERESK) shows a compositional bias: basic and acidic residues.

In terms of tissue distribution, central nervous system; most neurons exhibit coexpression with Burs.

The protein resides in the secreted. Its function is as follows. Cardioregulatory neurohormone that increases heart beat rate during adult wing inflation; has no effect on beat amplitude. The effect of CCAP is both ino- and chronotropic. The protein is Cardioactive peptide of Drosophila melanogaster (Fruit fly).